Here is a 970-residue protein sequence, read N- to C-terminus: Phosphoenolpyruvate carboxylase 1 (970 aa).

Ser15 carries the post-translational modification Phosphoserine. Active-site residues include His177, Lys606, and Arg647.

Belongs to the PEPCase type 1 family. Homotetramer. It depends on Mg(2+) as a cofactor.

It is found in the cytoplasm. The enzyme catalyses oxaloacetate + phosphate = phosphoenolpyruvate + hydrogencarbonate. Its pathway is photosynthesis; C4 acid pathway. Its activity is regulated as follows. By light-reversible phosphorylation. In terms of biological role, through the carboxylation of phosphoenolpyruvate (PEP) it forms oxaloacetate, a four-carbon dicarboxylic acid source for the tricarboxylic acid cycle. In Zea mays (Maize), this protein is Phosphoenolpyruvate carboxylase 1 (PEP1).